A 373-amino-acid polypeptide reads, in one-letter code: Putative glutamate--cysteine ligase 2-1 (373 aa).

It belongs to the glutamate--cysteine ligase type 2 family. YbdK subfamily.

It catalyses the reaction L-cysteine + L-glutamate + ATP = gamma-L-glutamyl-L-cysteine + ADP + phosphate + H(+). In terms of biological role, ATP-dependent carboxylate-amine ligase which exhibits weak glutamate--cysteine ligase activity. The protein is Putative glutamate--cysteine ligase 2-1 of Legionella pneumophila (strain Paris).